The sequence spans 506 residues: MASGDLYEVERIVDKRKNKKGKWEYLIRWKGYGSTEDTWEPEHHLLHCEEFIDEFNGLHMSKDKRIKSGKQSSTSKLLRDSRGPSVEKLSHRPSDPGKSKGTSHKRKRINPPLAKPKKGYSGKPSSGGDRATKTVSYRTTPSGLQIMPLKKSQNGMENGDAGSEKDERHFGNGSHQPGLDLNDHVGEQDMGECDVNHATLAENGLGSALTNGGLNLHSPVKRKLEAEKDYVFDKRLRYSVRQNESNCRFRDIVVRKEEGFTHILLSSQTSDNNALTPEIMKEVRRALCNAATDDSKLLLLSAVGSVFCSGLDYSYLIGRLSSDRRKESTRIAEAIRDFVKAFIQFKKPIVVAINGPALGLGASILPLCDIVWASEKAWFQTPYATIRLTPAGCSSYTFPQILGVALANEMLFCGRKLTAQEACSRGLVSQVFWPTTFSQEVMLRVKEMASCSAVVLEESKCLVRSFLKSVLEDVNEKECLMLKQLWSSSKGLDSLFSYLQDKIYEV.

Residues 7 to 67 (YEVERIVDKR…LHMSKDKRIK (61 aa)) enclose the Chromo domain. Residues 64-177 (KRIKSGKQSS…RHFGNGSHQP (114 aa)) form a disordered region. Residues 88–98 (KLSHRPSDPGK) are compositionally biased toward basic and acidic residues. A compositionally biased stretch (basic residues) spans 101 to 120 (GTSHKRKRINPPLAKPKKGY). Residues 133–143 (KTVSYRTTPSG) are compositionally biased toward polar residues.

In terms of assembly, interacts (via chromo domain) with histone H3K9me3. Ubiquitously expressed.

It localises to the nucleus. This chain is Chromodomain Y-like protein 2 (CDYL2), found in Homo sapiens (Human).